A 331-amino-acid chain; its full sequence is Homeobox protein DBX1 (331 aa).

Disordered stretches follow at residues 56 to 94 (RAVP…ISSN) and 232 to 331 (KERE…ITVS). The homeobox DNA-binding region spans 173 to 232 (GMLRRAVFSDVQRKALEKMFQKQKYISKPDRKKLAGKLGLKDSQVKIWFQNRRMKWRNSK). The segment covering 256–266 (DLSDVSKKSSG) has biased composition (basic and acidic residues). A compositionally biased stretch (low complexity) spans 299–314 (PSSPFNSSSASKPSDF). Residues 315 to 331 (SDSEEEGGEQEEEITVS) are compositionally biased toward acidic residues.

It belongs to the H2.0 homeobox family.

Its subcellular location is the nucleus. Its function is as follows. May function within the midpoint progenitor population to inhibit neuronal differentiation, possibly through modulating the function of Xash3. The polypeptide is Homeobox protein DBX1 (dbx1) (Xenopus laevis (African clawed frog)).